A 297-amino-acid chain; its full sequence is MLKIGSHVSMSGKHMLLAASKEAVSYGANTFMIYTGAPQNTRRKKIEDLNIEAGRAHMKENGIDEIVVHAPYIINIGNTTNPATFELGVDFLRSEIERTAAIGARQIVLHPGAHVGAGAETGIKKIIEGLNEVIVPGQNVQIALETMAGKGSECGRSFEELAEIIAGVTHNEHLSVCFDTCHTHDAGYDVANDFDGVLNEFDKIVGIDRIKVLHVNDSKNIKGARKDRHENIGFGEIGFDALQYIVHHEQLADIPKILETPYVGEDKKNKKPPYRFEIEMLKEKQFDKELLEKISAQ.

His69, His110, Glu145, Asp179, His182, His214, Asp227, His229, and Glu259 together coordinate Zn(2+).

It belongs to the AP endonuclease 2 family. The cofactor is Zn(2+).

It carries out the reaction Endonucleolytic cleavage to 5'-phosphooligonucleotide end-products.. In terms of biological role, endonuclease IV plays a role in DNA repair. It cleaves phosphodiester bonds at apurinic or apyrimidinic (AP) sites, generating a 3'-hydroxyl group and a 5'-terminal sugar phosphate. This is Probable endonuclease 4 from Bacillus velezensis (strain DSM 23117 / BGSC 10A6 / LMG 26770 / FZB42) (Bacillus amyloliquefaciens subsp. plantarum).